A 53-amino-acid polypeptide reads, in one-letter code: UPF0391 membrane protein TM1040_2720 (53 aa).

2 helical membrane passes run 4–24 (WALA…GGIA) and 29–48 (GIAQ…ALIL).

This sequence belongs to the UPF0391 family.

Its subcellular location is the cell membrane. The protein is UPF0391 membrane protein TM1040_2720 of Ruegeria sp. (strain TM1040) (Silicibacter sp.).